Consider the following 225-residue polypeptide: Ribonuclease HII (225 aa).

The region spanning 35–225 is the RNase H type-2 domain; the sequence is GLVAGVDEVG…SFRPCQISPD (191 aa). Residues aspartate 41, glutamate 42, and aspartate 137 each contribute to the a divalent metal cation site.

This sequence belongs to the RNase HII family. Mn(2+) serves as cofactor. Mg(2+) is required as a cofactor.

The protein resides in the cytoplasm. The enzyme catalyses Endonucleolytic cleavage to 5'-phosphomonoester.. Functionally, endonuclease that specifically degrades the RNA of RNA-DNA hybrids. The protein is Ribonuclease HII of Nostoc sp. (strain PCC 7120 / SAG 25.82 / UTEX 2576).